We begin with the raw amino-acid sequence, 190 residues long: Guanylate kinase (190 aa).

The region spanning N3–E185 is the Guanylate kinase-like domain. Residue A10 to S17 participates in ATP binding.

Belongs to the guanylate kinase family.

It localises to the cytoplasm. The catalysed reaction is GMP + ATP = GDP + ADP. Functionally, essential for recycling GMP and indirectly, cGMP. The protein is Guanylate kinase of Francisella tularensis subsp. tularensis (strain FSC 198).